A 520-amino-acid polypeptide reads, in one-letter code: Anthranilate synthase component 1 (520 aa).

Residues S40 and 291–293 each bind L-tryptophan; that span reads PYM. 328-329 serves as a coordination point for chorismate; the sequence is GT. Mg(2+) is bound at residue E361. Chorismate contacts are provided by residues Y449, R469, 483–485, and G485; that span reads GAG. E498 contributes to the Mg(2+) binding site.

This sequence belongs to the anthranilate synthase component I family. Heterotetramer consisting of two non-identical subunits: a beta subunit (TrpG) and a large lpha subunit (TrpE). Requires Mg(2+) as cofactor.

The catalysed reaction is chorismate + L-glutamine = anthranilate + pyruvate + L-glutamate + H(+). The protein operates within amino-acid biosynthesis; L-tryptophan biosynthesis; L-tryptophan from chorismate: step 1/5. Its activity is regulated as follows. Cooperatively feedback inhibited by tryptophan. In terms of biological role, part of a heterotetrameric complex that catalyzes the two-step biosynthesis of anthranilate, an intermediate in the biosynthesis of L-tryptophan. In the first step, the glutamine-binding beta subunit (TrpG) of anthranilate synthase (AS) provides the glutamine amidotransferase activity which generates ammonia as a substrate that, along with chorismate, is used in the second step, catalyzed by the large alpha subunit of AS (TrpE) to produce anthranilate. In the absence of TrpG, TrpE can synthesize anthranilate directly from chorismate and high concentrations of ammonia. This is Anthranilate synthase component 1 (trpE) from Escherichia coli (strain K12).